The following is a 45-amino-acid chain: Lysis protein for colicin E1 (45 aa).

An N-terminal signal peptide occupies residues 1–17 (MRKRFFVGIFAINLLVG). Cysteine 18 carries the N-palmitoyl cysteine lipid modification. The S-diacylglycerol cysteine moiety is linked to residue cysteine 18.

Its subcellular location is the cell outer membrane. Its function is as follows. Lysis proteins are required for both colicin release and partial cell lysis. This Escherichia coli protein is Lysis protein for colicin E1 (lys).